The chain runs to 503 residues: Cardiolipin synthase (503 aa).

The next 3 membrane-spanning stretches (helical) occupy residues 5-25 (LNVLLFLLILSTGLYLTRSFW), 29-49 (IVGAFSVLITITVVFIGIVIF), and 59-79 (LTWLMVLAVFPVVGFIFYLMF). 2 consecutive PLD phosphodiesterase domains span residues 238–265 (INYRNHRKIIVIDGTVGFVGGLNIGDEY) and 416–443 (TRGFLHSKIIIVDNEIASIGTSNMDMRS). Active-site residues include His243, Lys245, Asp250, His421, Lys423, and Asp428.

It belongs to the phospholipase D family. Cardiolipin synthase subfamily.

It localises to the cell membrane. The catalysed reaction is 2 a 1,2-diacyl-sn-glycero-3-phospho-(1'-sn-glycerol) = a cardiolipin + glycerol. Its function is as follows. Catalyzes the reversible phosphatidyl group transfer from one phosphatidylglycerol molecule to another to form cardiolipin (CL) (diphosphatidylglycerol) and glycerol. The sequence is that of Cardiolipin synthase (cls) from Halalkalibacterium halodurans (strain ATCC BAA-125 / DSM 18197 / FERM 7344 / JCM 9153 / C-125) (Bacillus halodurans).